Consider the following 358-residue polypeptide: Magnesium-protoporphyrin IX monomethyl ester [oxidative] cyclase 3 (358 aa).

It belongs to the AcsF family. Fe cation serves as cofactor.

The catalysed reaction is Mg-protoporphyrin IX 13-monomethyl ester + 3 NADPH + 3 O2 + 2 H(+) = 3,8-divinyl protochlorophyllide a + 3 NADP(+) + 5 H2O. It functions in the pathway porphyrin-containing compound metabolism; chlorophyll biosynthesis (light-independent). In terms of biological role, catalyzes the formation of the isocyclic ring in chlorophyll biosynthesis. Mediates the cyclase reaction, which results in the formation of divinylprotochlorophyllide (Pchlide) characteristic of all chlorophylls from magnesium-protoporphyrin IX 13-monomethyl ester (MgPMME). The sequence is that of Magnesium-protoporphyrin IX monomethyl ester [oxidative] cyclase 3 from Nostoc sp. (strain PCC 7120 / SAG 25.82 / UTEX 2576).